The chain runs to 695 residues: MAP kinase phosphatase with leucine-rich repeats protein 2 (695 aa).

LRR repeat units follow at residues 101-122 (SLKS…ITLL), 124-145 (NLNH…LSQL), 147-167 (SLET…NVCK), 170-191 (SLTS…FLNL), 193-214 (NLKD…LPNN), 215-235 (IEKL…SLIR), 239-260 (SLTT…LSCL), 262-283 (NVKT…VLGS), 286-307 (SLVT…VILL), and 309-330 (NLRI…IPTE). The span at 413-426 (SENNEINENNQLLT) shows a compositional bias: low complexity. 2 disordered regions span residues 413 to 438 (SENN…KNDS) and 492 to 519 (QEQL…QQQQ). Residues 556 to 695 (VPDLIIDKLY…LKKFEKDLFK (140 aa)) enclose the Tyrosine-protein phosphatase domain. The Phosphocysteine intermediate role is filled by C639.

The protein belongs to the protein-tyrosine phosphatase family. Non-receptor class dual specificity subfamily.

It carries out the reaction O-phospho-L-tyrosyl-[protein] + H2O = L-tyrosyl-[protein] + phosphate. It catalyses the reaction O-phospho-L-seryl-[protein] + H2O = L-seryl-[protein] + phosphate. The catalysed reaction is O-phospho-L-threonyl-[protein] + H2O = L-threonyl-[protein] + phosphate. In terms of biological role, probable phosphatase with dual specificity toward Ser/Thr and Tyr-containing proteins. The sequence is that of MAP kinase phosphatase with leucine-rich repeats protein 2 (mpl2) from Dictyostelium discoideum (Social amoeba).